A 180-amino-acid polypeptide reads, in one-letter code: ADP ribosylation factor 4 (180 aa).

A lipid anchor (N-myristoyl glycine) is attached at Gly-2. Residues 24-31 (GLDAAGKT), 67-71 (DVGGQ), and 126-129 (NKQD) each bind GTP.

It belongs to the small GTPase superfamily. Arf family. In terms of tissue distribution, uniformly distributed throughout adults.

The protein resides in the golgi apparatus. GTP-binding protein involved in protein trafficking; may modulate vesicle budding and uncoating within the Golgi apparatus. The sequence is that of ADP ribosylation factor 4 from Drosophila melanogaster (Fruit fly).